The primary structure comprises 572 residues: Methionine--tRNA ligase (572 aa).

Residues 11 to 21 (PYINGIKHLGN) carry the 'HIGH' region motif. Residues Cys143, Cys146, Cys156, and Cys159 each contribute to the Zn(2+) site. A 'KMSKS' region motif is present at residues 346 to 350 (QFSTS). Thr349 provides a ligand contact to ATP.

The protein belongs to the class-I aminoacyl-tRNA synthetase family. MetG type 1 subfamily. As to quaternary structure, monomer. The cofactor is Zn(2+).

The protein resides in the cytoplasm. It carries out the reaction tRNA(Met) + L-methionine + ATP = L-methionyl-tRNA(Met) + AMP + diphosphate. Functionally, is required not only for elongation of protein synthesis but also for the initiation of all mRNA translation through initiator tRNA(fMet) aminoacylation. The chain is Methionine--tRNA ligase from Ruegeria pomeroyi (strain ATCC 700808 / DSM 15171 / DSS-3) (Silicibacter pomeroyi).